Here is a 1167-residue protein sequence, read N- to C-terminus: DNA-directed RNA polymerase subunit beta (1167 aa).

The protein belongs to the RNA polymerase beta chain family. In terms of assembly, the RNAP catalytic core consists of 2 alpha, 1 beta, 1 beta' and 1 omega subunit. When a sigma factor is associated with the core the holoenzyme is formed, which can initiate transcription.

It catalyses the reaction RNA(n) + a ribonucleoside 5'-triphosphate = RNA(n+1) + diphosphate. Its function is as follows. DNA-dependent RNA polymerase catalyzes the transcription of DNA into RNA using the four ribonucleoside triphosphates as substrates. This chain is DNA-directed RNA polymerase subunit beta, found in Treponema denticola (strain ATCC 35405 / DSM 14222 / CIP 103919 / JCM 8153 / KCTC 15104).